The following is a 265-amino-acid chain: Glutamate racemase (265 aa).

Residues 7 to 8 (DS) and 39 to 40 (YG) contribute to the substrate site. Cys70 (proton donor/acceptor) is an active-site residue. Substrate is bound at residue 71-72 (NT). Residue Cys177 is the Proton donor/acceptor of the active site.

This sequence belongs to the aspartate/glutamate racemases family.

The catalysed reaction is L-glutamate = D-glutamate. It functions in the pathway cell wall biogenesis; peptidoglycan biosynthesis. In terms of biological role, provides the (R)-glutamate required for cell wall biosynthesis. The sequence is that of Glutamate racemase from Prochlorococcus marinus (strain NATL2A).